A 38-amino-acid polypeptide reads, in one-letter code: Toxin Lqh 8/6 (38 aa).

Intrachain disulfides connect Cys2-Cys19, Cys5-Cys28, Cys16-Cys33, and Cys20-Cys35.

In terms of tissue distribution, expressed by the venom gland.

The protein localises to the secreted. Functionally, toxin with unknown function in healthy organisms. On glioma cells, interacts with chloride channels (probably ClC-3/CLCN3) and MMP2 at the surface of glioma cells. This complex is then internalized via caveolae, thus inhibiting the chloride channels necessary for cell shrinkage and tumor propagation. This chain is Toxin Lqh 8/6, found in Leiurus hebraeus (Hebrew deathstalker scorpion).